The following is a 535-amino-acid chain: uncharacterized protein (535 aa).

2 helical membrane passes run 7–27 (DFDV…AYLA) and 509–529 (GGAV…ACLA).

The protein resides in the cell membrane. This is an uncharacterized protein from Mycobacterium bovis (strain ATCC BAA-935 / AF2122/97).